The following is a 224-amino-acid chain: Golgi to ER traffic protein 1 (224 aa).

Residues 1-33 (MDEAIIVDAEFVAPVGTTAGEFVPIDRAPAAGL) are Lumenal-facing. Residues 34–53 (LLLVAFVVLYAKVISKLGKP) form a helical membrane-spanning segment. Residues 54–137 (AIQEFLWEII…RFFTIISSAI (84 aa)) are Cytoplasmic-facing. Residues 102-124 (AKLDREYGKLKVEIEDINNLLTA) adopt a coiled-coil conformation. A helical membrane pass occupies residues 138-158 (FLSTTGMKMFLRIKHRKAAIF). Topologically, residues 159-182 (WLPKNAFPYPIEYILSFSSAPLGS) are lumenal. Residues 183 to 199 (VSVSAWLMICDAAMDLI) form a helical membrane-spanning segment. Over 200-224 (VTIFVALVVGVIGMLRSNKVKPKTA) the chain is Cytoplasmic.

This sequence belongs to the WRB/GET1 family. In terms of assembly, component of the Golgi to ER traffic (GET) complex, which is composed of GET1, GET2 and GET3. Within the complex, GET1 and GET2 form a heterotetramer which is stabilized by phosphatidylinositol binding and which binds to the GET3 homodimer.

It localises to the endoplasmic reticulum membrane. The protein localises to the golgi apparatus membrane. Required for the post-translational delivery of tail-anchored (TA) proteins to the endoplasmic reticulum. Together with GET2, acts as a membrane receptor for soluble GET3, which recognizes and selectively binds the transmembrane domain of TA proteins in the cytosol. The GET complex cooperates with the HDEL receptor ERD2 to mediate the ATP-dependent retrieval of resident ER proteins that contain a C-terminal H-D-E-L retention signal from the Golgi to the ER. The protein is Golgi to ER traffic protein 1 of Yarrowia lipolytica (strain CLIB 122 / E 150) (Yeast).